The primary structure comprises 582 residues: 2-(3-amino-3-carboxypropyl)histidine synthase subunit 2 (582 aa).

[4Fe-4S] cluster is bound by residues C145, C166, and C398.

The protein belongs to the DPH1/DPH2 family. DPH2 subfamily. Component of the 2-(3-amino-3-carboxypropyl)histidine synthase complex composed of DPH1, DPH2, DPH3 and a NADH-dependent reductase, predominantly CBR1. [4Fe-4S] cluster is required as a cofactor.

The protein resides in the cytoplasm. It functions in the pathway protein modification; peptidyl-diphthamide biosynthesis. Functionally, required for the first step of diphthamide biosynthesis, a post-translational modification of histidine which occurs in elongation factor 2. DPH1 and DPH2 transfer a 3-amino-3-carboxypropyl (ACP) group from S-adenosyl-L-methionine (SAM) to a histidine residue, the reaction is assisted by a reduction system comprising DPH3 and a NADH-dependent reductase, predominantly CBR1. Facilitates the reduction of the catalytic iron-sulfur cluster found in the DPH1 subunit. This is 2-(3-amino-3-carboxypropyl)histidine synthase subunit 2 (DPH2) from Eremothecium gossypii (strain ATCC 10895 / CBS 109.51 / FGSC 9923 / NRRL Y-1056) (Yeast).